We begin with the raw amino-acid sequence, 352 residues long: Nicotinate-nucleotide--dimethylbenzimidazole phosphoribosyltransferase (352 aa).

The Proton acceptor role is filled by glutamate 318.

This sequence belongs to the CobT family.

It catalyses the reaction 5,6-dimethylbenzimidazole + nicotinate beta-D-ribonucleotide = alpha-ribazole 5'-phosphate + nicotinate + H(+). It participates in nucleoside biosynthesis; alpha-ribazole biosynthesis; alpha-ribazole from 5,6-dimethylbenzimidazole: step 1/2. Its function is as follows. Catalyzes the synthesis of alpha-ribazole-5'-phosphate from nicotinate mononucleotide (NAMN) and 5,6-dimethylbenzimidazole (DMB). The chain is Nicotinate-nucleotide--dimethylbenzimidazole phosphoribosyltransferase from Dehalococcoides mccartyi (strain ATCC BAA-2100 / JCM 16839 / KCTC 5957 / BAV1).